The sequence spans 301 residues: Glycine--tRNA ligase alpha subunit (301 aa).

Belongs to the class-II aminoacyl-tRNA synthetase family. As to quaternary structure, tetramer of two alpha and two beta subunits.

Its subcellular location is the cytoplasm. The catalysed reaction is tRNA(Gly) + glycine + ATP = glycyl-tRNA(Gly) + AMP + diphosphate. The sequence is that of Glycine--tRNA ligase alpha subunit from Shewanella amazonensis (strain ATCC BAA-1098 / SB2B).